The sequence spans 824 residues: Leucine--tRNA ligase (824 aa).

The short motif at 42–52 (PYPSGRIHMGH) is the 'HIGH' region element. The 'KMSKS' region signature appears at 581-585 (KMSKS). Lysine 584 lines the ATP pocket.

It belongs to the class-I aminoacyl-tRNA synthetase family.

The protein resides in the cytoplasm. It carries out the reaction tRNA(Leu) + L-leucine + ATP = L-leucyl-tRNA(Leu) + AMP + diphosphate. This is Leucine--tRNA ligase from Geotalea uraniireducens (strain Rf4) (Geobacter uraniireducens).